The chain runs to 404 residues: Cysteine desulfurase IscS (404 aa).

Residues 75–76, Asn155, Gln183, and 203–205 each bind pyridoxal 5'-phosphate; these read AT and SGH. At Lys206 the chain carries N6-(pyridoxal phosphate)lysine. Thr243 serves as a coordination point for pyridoxal 5'-phosphate. The active-site Cysteine persulfide intermediate is the Cys328. Cys328 contributes to the [2Fe-2S] cluster binding site.

The protein belongs to the class-V pyridoxal-phosphate-dependent aminotransferase family. NifS/IscS subfamily. In terms of assembly, homodimer. Forms a heterotetramer with IscU, interacts with other sulfur acceptors. The cofactor is pyridoxal 5'-phosphate.

The protein resides in the cytoplasm. It catalyses the reaction (sulfur carrier)-H + L-cysteine = (sulfur carrier)-SH + L-alanine. The protein operates within cofactor biosynthesis; iron-sulfur cluster biosynthesis. Its function is as follows. Master enzyme that delivers sulfur to a number of partners involved in Fe-S cluster assembly, tRNA modification or cofactor biosynthesis. Catalyzes the removal of elemental sulfur atoms from cysteine to produce alanine. Functions as a sulfur delivery protein for Fe-S cluster synthesis onto IscU, an Fe-S scaffold assembly protein, as well as other S acceptor proteins. This chain is Cysteine desulfurase IscS, found in Edwardsiella ictaluri (strain 93-146).